The sequence spans 260 residues: uncharacterized protein (260 aa).

The N-terminal stretch at 1 to 22 is a signal peptide; the sequence is MGYIKRIGLYISIFILIVMVAG. Cys23 carries N-palmitoyl cysteine lipidation. Cys23 is lipidated: S-diacylglycerol cysteine.

It belongs to the staphylococcal tandem lipoprotein family.

The protein resides in the cell membrane. This is an uncharacterized protein from Staphylococcus aureus (strain bovine RF122 / ET3-1).